Here is a 273-residue protein sequence, read N- to C-terminus: Glutamate racemase (273 aa).

Substrate is bound by residues 17 to 18 (DS) and 49 to 50 (YG). Cysteine 80 acts as the Proton donor/acceptor in catalysis. Residue 81–82 (NT) coordinates substrate. Cysteine 190 (proton donor/acceptor) is an active-site residue. A substrate-binding site is contributed by 191–192 (TH).

The protein belongs to the aspartate/glutamate racemases family.

It carries out the reaction L-glutamate = D-glutamate. Its pathway is cell wall biogenesis; peptidoglycan biosynthesis. Provides the (R)-glutamate required for cell wall biosynthesis. The protein is Glutamate racemase of Corynebacterium glutamicum (strain ATCC 13032 / DSM 20300 / JCM 1318 / BCRC 11384 / CCUG 27702 / LMG 3730 / NBRC 12168 / NCIMB 10025 / NRRL B-2784 / 534).